A 185-amino-acid polypeptide reads, in one-letter code: Elongation factor P (185 aa).

The protein belongs to the elongation factor P family.

The protein resides in the cytoplasm. The protein operates within protein biosynthesis; polypeptide chain elongation. In terms of biological role, involved in peptide bond synthesis. Stimulates efficient translation and peptide-bond synthesis on native or reconstituted 70S ribosomes in vitro. Probably functions indirectly by altering the affinity of the ribosome for aminoacyl-tRNA, thus increasing their reactivity as acceptors for peptidyl transferase. The polypeptide is Elongation factor P (Methylobacillus flagellatus (strain ATCC 51484 / DSM 6875 / VKM B-1610 / KT)).